Here is a 391-residue protein sequence, read N- to C-terminus: Arrestin-C (391 aa).

The segment covering alanine 369–serine 379 has biased composition (basic and acidic residues). The tract at residues alanine 369–serine 391 is disordered.

This sequence belongs to the arrestin family. Homodimer; disulfide-linked in response to retinal illumination. Interacts with CXCR4; the interaction is dependent on the C-terminal phosphorylation of CXCR4 and modulates the calcium ion mobilization activity of CXCR4. Interacts with GPR84.

The protein localises to the photoreceptor inner segment. It is found in the cell projection. Its subcellular location is the cilium. The protein resides in the photoreceptor outer segment. Its function is as follows. May play a role in an as yet undefined retina-specific signal transduction. Could bind to photoactivated-phosphorylated red/green opsins. This is Arrestin-C (ARR3) from Sus scrofa (Pig).